The sequence spans 222 residues: Peptide methionine sulfoxide reductase MsrA 1 (222 aa).

The active site involves Cys-57.

Belongs to the MsrA Met sulfoxide reductase family.

It catalyses the reaction L-methionyl-[protein] + [thioredoxin]-disulfide + H2O = L-methionyl-(S)-S-oxide-[protein] + [thioredoxin]-dithiol. The catalysed reaction is [thioredoxin]-disulfide + L-methionine + H2O = L-methionine (S)-S-oxide + [thioredoxin]-dithiol. Functionally, has an important function as a repair enzyme for proteins that have been inactivated by oxidation. Catalyzes the reversible oxidation-reduction of methionine sulfoxide in proteins to methionine. This is Peptide methionine sulfoxide reductase MsrA 1 (msrA1) from Synechocystis sp. (strain ATCC 27184 / PCC 6803 / Kazusa).